The chain runs to 506 residues: Maturase K (506 aa).

It belongs to the intron maturase 2 family. MatK subfamily.

Its subcellular location is the plastid. The protein resides in the chloroplast. Functionally, usually encoded in the trnK tRNA gene intron. Probably assists in splicing its own and other chloroplast group II introns. This Trifolium lupinaster (Lupine clover) protein is Maturase K.